A 475-amino-acid chain; its full sequence is Enolase (475 aa).

Position 179 (Q179) interacts with (2R)-2-phosphoglycerate. Catalysis depends on E221, which acts as the Proton donor. The Mg(2+) site is built by D258, E312, and D339. The (2R)-2-phosphoglycerate site is built by K364, R393, S394, and K415. The Proton acceptor role is filled by K364. Residues 454 to 475 form a disordered region; it reads STPAATPKKSPAKKTTKAKSKK. Residues 463–475 are compositionally biased toward basic residues; that stretch reads SPAKKTTKAKSKK.

The protein belongs to the enolase family. Requires Mg(2+) as cofactor.

Its subcellular location is the cell membrane. The protein resides in the cytoplasm. The protein localises to the secreted. It localises to the cell surface. It catalyses the reaction (2R)-2-phosphoglycerate = phosphoenolpyruvate + H2O. It participates in carbohydrate degradation; glycolysis; pyruvate from D-glyceraldehyde 3-phosphate: step 4/5. Functionally, catalyzes the reversible conversion of 2-phosphoglycerate (2-PG) into phosphoenolpyruvate (PEP). It is essential for the degradation of carbohydrates via glycolysis. 'Moonlights' as a plasminogen receptor. Binds host (chicken) plasminogen; enolase antiserum inhibits M.gallisepticum adherence to chicken embryo fibroblasts. The protein is Enolase of Mycoplasmoides gallisepticum (strain R(low / passage 15 / clone 2)) (Mycoplasma gallisepticum).